The chain runs to 242 residues: Floral homeotic protein AGAMOUS (242 aa).

The MADS-box domain maps to 19–73; it reads RGKIEIKRIENTTNRQVTFCKRRNGLLKKAYELSVLCDAEVALIVFSTRGRLYEY. The K-box domain maps to 103 to 193; sequence AQFYQQEASK…RAKIAENERA (91 aa).

As to expression, flower. Preferentially expressed in stamen and carpel and weakly in petal. Undetected in leaves and roots.

It is found in the nucleus. Functionally, probable transcription factor involved in regulating genes that determines stamen and carpel development in wild-type flowers. This chain is Floral homeotic protein AGAMOUS (AG2), found in Panax ginseng (Korean ginseng).